The sequence spans 524 residues: Probable cytochrome P450 519C1 (524 aa).

A helical transmembrane segment spans residues 1-21; it reads MNILLLIFYFLVCFLIFDFIK. C470 contacts heme.

This sequence belongs to the cytochrome P450 family. Requires heme as cofactor.

The protein resides in the membrane. The polypeptide is Probable cytochrome P450 519C1 (cyp519C1) (Dictyostelium discoideum (Social amoeba)).